An 89-amino-acid chain; its full sequence is MEEKVQEFLKDSTKEQKVFFESLNNQTERVCQQTESGDISCIELAAAETKLFATMQSLGFICTLSADPNRPTVFECKRELDTNERKERL.

This is an uncharacterized protein from Schizosaccharomyces pombe (strain 972 / ATCC 24843) (Fission yeast).